The chain runs to 151 residues: Ribosome maturation factor RimP (151 aa).

This sequence belongs to the RimP family.

Its subcellular location is the cytoplasm. Its function is as follows. Required for maturation of 30S ribosomal subunits. This Endomicrobium trichonymphae protein is Ribosome maturation factor RimP.